We begin with the raw amino-acid sequence, 103 residues long: Large ribosomal subunit protein bL21 (103 aa).

Belongs to the bacterial ribosomal protein bL21 family. As to quaternary structure, part of the 50S ribosomal subunit. Contacts protein L20.

Functionally, this protein binds to 23S rRNA in the presence of protein L20. The sequence is that of Large ribosomal subunit protein bL21 from Acetivibrio thermocellus (strain ATCC 27405 / DSM 1237 / JCM 9322 / NBRC 103400 / NCIMB 10682 / NRRL B-4536 / VPI 7372) (Clostridium thermocellum).